The sequence spans 508 residues: Photosystem II CP47 reaction center protein (508 aa).

Helical transmembrane passes span 21–36 (AVHL…WAGS), 101–115 (IVLS…IWHW), 140–156 (GIHL…FGAF), 203–218 (IAAG…FHLS), 237–252 (VLSS…AFVV), and 457–472 (TFAL…HGAR).

Belongs to the PsbB/PsbC family. PsbB subfamily. PSII is composed of 1 copy each of membrane proteins PsbA, PsbB, PsbC, PsbD, PsbE, PsbF, PsbH, PsbI, PsbJ, PsbK, PsbL, PsbM, PsbT, PsbX, PsbY, PsbZ, Psb30/Ycf12, at least 3 peripheral proteins of the oxygen-evolving complex and a large number of cofactors. It forms dimeric complexes. Requires Binds multiple chlorophylls. PSII binds additional chlorophylls, carotenoids and specific lipids. as cofactor.

The protein resides in the plastid. The protein localises to the chloroplast thylakoid membrane. In terms of biological role, one of the components of the core complex of photosystem II (PSII). It binds chlorophyll and helps catalyze the primary light-induced photochemical processes of PSII. PSII is a light-driven water:plastoquinone oxidoreductase, using light energy to abstract electrons from H(2)O, generating O(2) and a proton gradient subsequently used for ATP formation. This Anthoceros angustus (Hornwort) protein is Photosystem II CP47 reaction center protein.